Reading from the N-terminus, the 434-residue chain is MAAADIARQVGEDCRTVPLAGHVGFDSLPDQLVNKSVSQGFCFNILCVGETGLGKSTLMDTLFNTKFEGEPATHTQPGVQLQSNTYDLQESNVGLKLTIVSTVGFGDQINKEDSYKPIVEFIDAQFEAYLQEELKIRRVLHSYHDSRIHVCLYFIAPTGHSLKSLDLVTMKKLDSKVNIIPVIAKSDAISKSELAKFKIKITSELVSNGVQIYQFPTDDESVSEINGTMNAHLPFAVVGSTEEVKIGNKMMRARQYPWGTVQVENEAHCDFVKLREMLIRVNMEDLREQTHARHYELYRRCKLEEMGFKDTDPDSKPFSLQETYEAKRNEFLGELQKKEEEMRQMFVQRVKEKEAELKEAEKELHEKFDRLKKLHQEEKKKLEDKKKCLDEEMNAFKQRKAAAELLQSQGSQAGGSQTLKRDKEKKNNPWLCIE.

A2 is subject to N-acetylalanine. Position 27 is a phosphoserine (S27). Residues 39–305 form the Septin-type G domain; the sequence is QGFCFNILCV…ELYRRCKLEE (267 aa). Residues 49-56 are G1 motif; sequence GETGLGKS. GTP contacts are provided by residues 49–56, G104, 185–193, G239, and R254; these read GETGLGKS and KSDAISKSE. Residues 101-104 form a G3 motif region; it reads STVG. The tract at residues 184–187 is G4 motif; that stretch reads AKSD. Residues 321–407 adopt a coiled-coil conformation; the sequence is QETYEAKRNE…QRKAAAELLQ (87 aa). At K367 the chain carries N6-acetyllysine. The disordered stretch occupies residues 403 to 434; it reads AELLQSQGSQAGGSQTLKRDKEKKNNPWLCIE. The span at 407-417 shows a compositional bias: low complexity; it reads QSQGSQAGGSQ. S416 is modified (phosphoserine). T418 carries the post-translational modification Phosphothreonine.

This sequence belongs to the TRAFAC class TrmE-Era-EngA-EngB-Septin-like GTPase superfamily. Septin GTPase family. As to quaternary structure, septins polymerize into heterooligomeric protein complexes that form filaments, and associate with cellular membranes, actin filaments and microtubules. GTPase activity is required for filament formation. Filaments are assembled from asymmetrical heterotrimers, composed of SEPTIN2, SEPTIN6 and SEPTIN7 that associate head-to-head to form a hexameric unit. Within the trimer, directly interacts with SEPTIN2 and SEPTIN7. Also interacts with SEPTIN9 and SEPTIN12. Interaction with SEPTIN12 alters filament structure. Component of a septin core octameric complex consisting of SEPTIN12, SEPTIN7, SEPTIN6 and SEPTIN2 or SEPTIN4 in the order 12-7-6-2-2-6-7-12 or 12-7-6-4-4-6-7-12 and located in the sperm annulus. Interacts with SOCS7. Interacts with HNRNPA1. Expressed in the cerebral cortex (at protein level). Associated with synaptic vesicles in various brain regions, including glomeruli of the olfactory bulb (at protein level).

The protein localises to the cytoplasm. It is found in the cytoskeleton. The protein resides in the spindle. Its subcellular location is the chromosome. It localises to the centromere. The protein localises to the kinetochore. It is found in the cleavage furrow. The protein resides in the midbody. Its subcellular location is the cell projection. It localises to the cilium. The protein localises to the flagellum. In terms of biological role, filament-forming cytoskeletal GTPase. Required for normal organization of the actin cytoskeleton. Involved in cytokinesis. Forms a filamentous structure with SEPTIN12, SEPTIN6, SEPTIN2 and probably SEPTIN4 at the sperm annulus which is required for the structural integrity and motility of the sperm tail during postmeiotic differentiation. In Mus musculus (Mouse), this protein is Septin-6.